A 362-amino-acid chain; its full sequence is Chorismate synthase (362 aa).

Position 47 (Arg47) interacts with NADP(+). FMN is bound by residues 124–126 (RSS), Gly286, 301–305 (KPTAT), and Arg327.

This sequence belongs to the chorismate synthase family. In terms of assembly, homotetramer. Requires FMNH2 as cofactor.

The enzyme catalyses 5-O-(1-carboxyvinyl)-3-phosphoshikimate = chorismate + phosphate. It participates in metabolic intermediate biosynthesis; chorismate biosynthesis; chorismate from D-erythrose 4-phosphate and phosphoenolpyruvate: step 7/7. In terms of biological role, catalyzes the anti-1,4-elimination of the C-3 phosphate and the C-6 proR hydrogen from 5-enolpyruvylshikimate-3-phosphate (EPSP) to yield chorismate, which is the branch point compound that serves as the starting substrate for the three terminal pathways of aromatic amino acid biosynthesis. This reaction introduces a second double bond into the aromatic ring system. The protein is Chorismate synthase of Rippkaea orientalis (strain PCC 8801 / RF-1) (Cyanothece sp. (strain PCC 8801)).